The following is a 91-amino-acid chain: Small ribosomal subunit protein uS19 (91 aa).

Belongs to the universal ribosomal protein uS19 family.

In terms of biological role, protein S19 forms a complex with S13 that binds strongly to the 16S ribosomal RNA. This is Small ribosomal subunit protein uS19 from Psychrobacter sp. (strain PRwf-1).